The sequence spans 84 residues: Small ribosomal subunit protein uS17c (84 aa).

Belongs to the universal ribosomal protein uS17 family. As to quaternary structure, part of the 30S ribosomal subunit.

Its subcellular location is the plastid. It is found in the chloroplast. In terms of biological role, one of the primary rRNA binding proteins, it binds specifically to the 5'-end of 16S ribosomal RNA. This chain is Small ribosomal subunit protein uS17c (rps17), found in Phaeodactylum tricornutum (strain CCAP 1055/1).